Consider the following 328-residue polypeptide: Gonadotropin-releasing hormone receptor (328 aa).

The Extracellular portion of the chain corresponds to methionine 1 to arginine 38. Asparagine 18 carries N-linked (GlcNAc...) asparagine glycosylation. The chain crosses the membrane as a helical span at residues valine 39–leucine 58. Topologically, residues lysine 59 to lysine 77 are cytoplasmic. A helical membrane pass occupies residues leucine 78 to leucine 97. At aspartate 98–lysine 115 the chain is on the extracellular side. Residue asparagine 102 is glycosylated (N-linked (GlcNAc...) asparagine). Residues cysteine 114 and cysteine 196 are joined by a disulfide bond. Residues valine 116–leucine 137 form a helical membrane-spanning segment. Topologically, residues aspartate 138–tryptophan 164 are cytoplasmic. Residues leucine 165–alanine 184 traverse the membrane as a helical segment. Residues aspartate 185–asparagine 212 are Extracellular-facing. Residues phenylalanine 213 to alanine 232 form a helical membrane-spanning segment. Topologically, residues lysine 233–threonine 281 are cytoplasmic. A helical transmembrane segment spans residues proline 282–valine 300. Topologically, residues serine 301–histidine 306 are extracellular. The helical transmembrane segment at phenylalanine 307 to phenylalanine 326 threads the bilayer. Topologically, residues serine 327–leucine 328 are cytoplasmic.

Belongs to the G-protein coupled receptor 1 family.

The protein resides in the cell membrane. In terms of biological role, receptor for gonadotropin releasing hormone (GnRH) that mediates the action of GnRH to stimulate the secretion of the gonadotropic hormones luteinizing hormone (LH) and follicle-stimulating hormone (FSH). This receptor mediates its action by association with G-proteins that activate a phosphatidylinositol-calcium second messenger system. The chain is Gonadotropin-releasing hormone receptor (GNRHR) from Bos mutus grunniens (Wild yak).